The sequence spans 74 residues: ATP synthase subunit 9, mitochondrial (74 aa).

2 helical membrane-spanning segments follow: residues 8–28 (MGAG…GNVF) and 50–70 (ILGF…AFLI).

This sequence belongs to the ATPase C chain family. As to quaternary structure, F-type ATPases have 2 components, CF(1) - the catalytic core - and CF(0) - the membrane proton channel. CF(1) has five subunits: alpha(3), beta(3), gamma(1), delta(1), epsilon(1). CF(0) has three main subunits: a, b and c.

The protein localises to the mitochondrion membrane. Its function is as follows. This protein is one of the chains of the nonenzymatic membrane component (F0) of mitochondrial ATPase. This Solanum lycopersicum (Tomato) protein is ATP synthase subunit 9, mitochondrial (ATP9).